Consider the following 192-residue polypeptide: Thymidylate kinase (192 aa).

7–14 lines the ATP pocket; it reads GVDGVGKS.

The protein belongs to the thymidylate kinase family.

The catalysed reaction is dTMP + ATP = dTDP + ADP. Phosphorylation of dTMP to form dTDP in both de novo and salvage pathways of dTTP synthesis. This chain is Thymidylate kinase, found in Campylobacter fetus subsp. fetus (strain 82-40).